Reading from the N-terminus, the 345-residue chain is Dihydroorotase (345 aa).

Zn(2+) contacts are provided by H14 and H16. Substrate-binding positions include 16-18 (HLR) and N42. The Zn(2+) site is built by K100, H137, and H175. N6-carboxylysine is present on K100. H137 lines the substrate pocket. Substrate is bound at residue L220. D248 contributes to the Zn(2+) binding site. The active site involves D248. Substrate is bound by residues H252 and A264.

Belongs to the metallo-dependent hydrolases superfamily. DHOase family. Class II DHOase subfamily. As to quaternary structure, homodimer. It depends on Zn(2+) as a cofactor.

The enzyme catalyses (S)-dihydroorotate + H2O = N-carbamoyl-L-aspartate + H(+). It functions in the pathway pyrimidine metabolism; UMP biosynthesis via de novo pathway; (S)-dihydroorotate from bicarbonate: step 3/3. In terms of biological role, catalyzes the reversible cyclization of carbamoyl aspartate to dihydroorotate. This chain is Dihydroorotase, found in Methylobacillus flagellatus (strain ATCC 51484 / DSM 6875 / VKM B-1610 / KT).